Consider the following 305-residue polypeptide: UDP-3-O-acyl-N-acetylglucosamine deacetylase (305 aa).

The Zn(2+) site is built by His78, His235, and Asp239. His262 serves as the catalytic Proton donor.

This sequence belongs to the LpxC family. The cofactor is Zn(2+).

It catalyses the reaction a UDP-3-O-[(3R)-3-hydroxyacyl]-N-acetyl-alpha-D-glucosamine + H2O = a UDP-3-O-[(3R)-3-hydroxyacyl]-alpha-D-glucosamine + acetate. Its pathway is glycolipid biosynthesis; lipid IV(A) biosynthesis; lipid IV(A) from (3R)-3-hydroxytetradecanoyl-[acyl-carrier-protein] and UDP-N-acetyl-alpha-D-glucosamine: step 2/6. Its function is as follows. Catalyzes the hydrolysis of UDP-3-O-myristoyl-N-acetylglucosamine to form UDP-3-O-myristoylglucosamine and acetate, the committed step in lipid A biosynthesis. The sequence is that of UDP-3-O-acyl-N-acetylglucosamine deacetylase from Citrifermentans bemidjiense (strain ATCC BAA-1014 / DSM 16622 / JCM 12645 / Bem) (Geobacter bemidjiensis).